A 700-amino-acid polypeptide reads, in one-letter code: Elongation factor G (700 aa).

A tr-type G domain is found at Asp10–Leu285. Residues Ala19–Thr26, Asp83–His87, and Asn137–Asp140 contribute to the GTP site.

The protein belongs to the TRAFAC class translation factor GTPase superfamily. Classic translation factor GTPase family. EF-G/EF-2 subfamily.

The protein resides in the cytoplasm. Functionally, catalyzes the GTP-dependent ribosomal translocation step during translation elongation. During this step, the ribosome changes from the pre-translocational (PRE) to the post-translocational (POST) state as the newly formed A-site-bound peptidyl-tRNA and P-site-bound deacylated tRNA move to the P and E sites, respectively. Catalyzes the coordinated movement of the two tRNA molecules, the mRNA and conformational changes in the ribosome. The chain is Elongation factor G from Lacticaseibacillus casei (strain BL23) (Lactobacillus casei).